The primary structure comprises 405 residues: Splicing factor 45 (405 aa).

The residue at position 2 (Ser2) is an N-acetylserine. Ser2 bears the Phosphoserine mark. A Glycyl lysine isopeptide (Lys-Gly) (interchain with G-Cter in SUMO2) cross-link involves residue Lys15. Position 21 is an N6-acetyllysine (Lys21). Residues Lys24 and Lys33 each participate in a glycyl lysine isopeptide (Lys-Gly) (interchain with G-Cter in SUMO2) cross-link. An N6-acetyllysine; alternate modification is found at Lys41. Lys41 participates in a covalent cross-link: Glycyl lysine isopeptide (Lys-Gly) (interchain with G-Cter in SUMO2); alternate. The segment covering 57–68 has biased composition (basic and acidic residues); it reads LKRGGSSDDRQI. Disordered stretches follow at residues 57–88 and 114–233; these read LKRGGSSDDRQIADTPPHVAAGLKDPVPSGFS and RQRE…FLAN. Residue Lys58 forms a Glycyl lysine isopeptide (Lys-Gly) (interchain with G-Cter in SUMO2) linkage. A Phosphothreonine modification is found at Thr71. Residues 114–153 are compositionally biased toward basic and acidic residues; that stretch reads RQREERQRQRELERQKEIEEREKRRKDRHEASGFSRRPDP. A phosphoserine mark is found at Ser155 and Ser169. Residues 182–200 show a composition bias toward basic and acidic residues; that stretch reads VEKDKELPRDFPYEEDSRP. Ser222 is subject to Phosphoserine. A G-patch domain is found at 235–283; that stretch reads GGTVAHKIMQKYGFREGQGLGKHEQGLSTALSVEKTSKRGGKIIVGDAT. At Thr237 the chain carries Phosphothreonine. Lys256 is covalently cross-linked (Glycyl lysine isopeptide (Lys-Gly) (interchain with G-Cter in SUMO2)). At Ser266 the chain carries Phosphoserine. Lys276 is covalently cross-linked (Glycyl lysine isopeptide (Lys-Gly) (interchain with G-Cter in SUMO2)). Phosphoserine occurs at positions 295 and 297. An RRM domain is found at 310 to 389; sequence VVLLRNMVGA…YFGGRVVKAC (80 aa).

In terms of assembly, binds SXL. Associates with the spliceosome. Interacts with SF3B1, SF1 and U2AF2.

The protein localises to the nucleus. Splice factor that binds to the single-stranded 3'AG at the exon/intron border and promotes its utilization in the second catalytic step. Involved in the regulation of alternative splicing and the utilization of cryptic splice sites. This Mus musculus (Mouse) protein is Splicing factor 45 (Rbm17).